Here is a 91-residue protein sequence, read N- to C-terminus: C-C motif chemokine 5 (91 aa).

The signal sequence occupies residues 1–23 (MKVFAAALAVILATATFCTPASA). 2 disulfides stabilise this stretch: cysteine 33/cysteine 57 and cysteine 34/cysteine 73.

This sequence belongs to the intercrine beta (chemokine CC) family.

The protein localises to the secreted. Chemoattractant for blood monocytes, memory T-helper cells and eosinophils. Causes the release of histamine from basophils and activates eosinophils. May activate several chemokine receptors including CCR1, CCR3, CCR4 and CCR5. May also be an agonist of the G protein-coupled receptor GPR75. Together with GPR75, may play a role in neuron survival through activation of a downstream signaling pathway involving the PI3, Akt and MAP kinases. By activating GPR75 may also play a role in insulin secretion by islet cells. The sequence is that of C-C motif chemokine 5 (CCL5) from Equus caballus (Horse).